Reading from the N-terminus, the 528-residue chain is Berberine bridge enzyme-like 17 (528 aa).

Residues 1–19 (MKEVVYVLLLVLLVSVSDA) form the signal peptide. N-linked (GlcNAc...) asparagine glycans are attached at residues asparagine 20, asparagine 35, asparagine 52, and asparagine 72. The cysteines at positions 32 and 94 are disulfide-linked. In terms of domain architecture, FAD-binding PCMH-type spans 69-246 (LNPNDTKLIA…LSWKINLVDV (178 aa)). A cross-link (6-(S-cysteinyl)-8alpha-(pros-histidyl)-FAD (His-Cys)) is located at residues 109 to 171 (HDYEGLSFTS…KTLAFAGGVC (63 aa)). N-linked (GlcNAc...) asparagine glycans are attached at residues asparagine 256, asparagine 340, and asparagine 439.

The protein belongs to the oxygen-dependent FAD-linked oxidoreductase family. FAD serves as cofactor. In terms of processing, the FAD cofactor is bound via a bicovalent 6-S-cysteinyl, 8alpha-N1-histidyl FAD linkage.

It is found in the secreted. The protein localises to the cell wall. This chain is Berberine bridge enzyme-like 17, found in Arabidopsis thaliana (Mouse-ear cress).